A 591-amino-acid chain; its full sequence is Trihelix transcription factor PTL (591 aa).

Residues 1–32 (MDQDQHPQYGIPELRQLMKGGGRTTTTTPSTS) are disordered. In terms of domain architecture, Myb-like 1 spans 118-177 (GRWPRQETLTLLEIRSRLDHKFKEANQKGPLWDEVSRIMSEEHGYQRSGKKCREKFENLY). Residues 380 to 410 (CSSPEERTNGNNEIRNNSETQNENGSDQTMT) are disordered. Residues 388–410 (NGNNEIRNNSETQNENGSDQTMT) are compositionally biased toward polar residues. The Myb-like 2 domain occupies 422–479 (WGEQEILKLMEIRTSMDSTFQEILGGCSDEFLWEEIAAKLIQLGFDQRSALLCKEKWE). Positions 491 to 551 (QINKKRKDNS…SNANANANVT (61 aa)) are disordered. Over residues 515–534 (IYNNRESGYNDNDPHQINEQ) the composition is skewed to polar residues. Residues 535–551 (GNVGSSTSNANANANVT) show a composition bias toward low complexity.

In terms of assembly, interacts with KIN10. In terms of tissue distribution, confined to flowers, at low levels. Also present in 7-days-old seedlings. Barely detectable in other tissues such as young seedlings, roots, stems, leaves and siliques. Expressed in flower primordia, more precisely between newly arisen sepal primordia and also at the basal margins of developing sepals.

The protein resides in the nucleus. In terms of biological role, transcription factor that prevents growth. Regulates perianth architecture in flower, mostly in the second whorl, probably by suppressing growth between initiating sepals, ensuring that they remain separate, and by modulating organ shapes. Required for the establishment of auxin flux. In Arabidopsis thaliana (Mouse-ear cress), this protein is Trihelix transcription factor PTL (PTL).